A 389-amino-acid chain; its full sequence is Chalcone synthase 4-1 (389 aa).

Cys-164 is an active-site residue.

The protein belongs to the thiolase-like superfamily. Chalcone/stilbene synthases family.

It catalyses the reaction (E)-4-coumaroyl-CoA + 3 malonyl-CoA + 3 H(+) = 2',4,4',6'-tetrahydroxychalcone + 3 CO2 + 4 CoA. The protein operates within secondary metabolite biosynthesis; flavonoid biosynthesis. Its function is as follows. The primary product of this enzyme is 4,2',4',6'-tetrahydroxychalcone (also termed naringenin-chalcone or chalcone) which can under specific conditions spontaneously isomerize into naringenin. The protein is Chalcone synthase 4-1 (CHS4-1) of Medicago sativa (Alfalfa).